The following is a 602-amino-acid chain: Isocitrate dehydrogenase kinase/phosphatase (602 aa).

ATP contacts are provided by residues 325-331 (APGIKGM) and Lys-346. Residue Asp-381 is part of the active site.

This sequence belongs to the AceK family.

It is found in the cytoplasm. It carries out the reaction L-seryl-[isocitrate dehydrogenase] + ATP = O-phospho-L-seryl-[isocitrate dehydrogenase] + ADP + H(+). Functionally, bifunctional enzyme which can phosphorylate or dephosphorylate isocitrate dehydrogenase (IDH) on a specific serine residue. This is a regulatory mechanism which enables bacteria to bypass the Krebs cycle via the glyoxylate shunt in response to the source of carbon. When bacteria are grown on glucose, IDH is fully active and unphosphorylated, but when grown on acetate or ethanol, the activity of IDH declines drastically concomitant with its phosphorylation. This chain is Isocitrate dehydrogenase kinase/phosphatase, found in Paracidovorax citrulli (strain AAC00-1) (Acidovorax citrulli).